The primary structure comprises 438 residues: 3-phosphoshikimate 1-carboxyvinyltransferase (438 aa).

Residues lysine 26, serine 27, and arginine 31 each contribute to the 3-phosphoshikimate site. Lysine 26 contributes to the phosphoenolpyruvate binding site. Phosphoenolpyruvate is bound by residues glycine 99 and arginine 127. 3-phosphoshikimate contacts are provided by serine 172, glutamine 174, aspartate 320, and lysine 347. Glutamine 174 is a phosphoenolpyruvate binding site. The active-site Proton acceptor is the aspartate 320. Phosphoenolpyruvate-binding residues include arginine 351 and arginine 392.

It belongs to the EPSP synthase family. In terms of assembly, monomer.

The protein localises to the cytoplasm. The enzyme catalyses 3-phosphoshikimate + phosphoenolpyruvate = 5-O-(1-carboxyvinyl)-3-phosphoshikimate + phosphate. It participates in metabolic intermediate biosynthesis; chorismate biosynthesis; chorismate from D-erythrose 4-phosphate and phosphoenolpyruvate: step 6/7. In terms of biological role, catalyzes the transfer of the enolpyruvyl moiety of phosphoenolpyruvate (PEP) to the 5-hydroxyl of shikimate-3-phosphate (S3P) to produce enolpyruvyl shikimate-3-phosphate and inorganic phosphate. The chain is 3-phosphoshikimate 1-carboxyvinyltransferase from Xanthomonas campestris pv. campestris (strain 8004).